The following is an 841-amino-acid chain: Protein translocase subunit SecA (841 aa).

ATP is bound by residues Gln85, 103-107 (GEGKT), and Asp492. The segment at 786–812 (REEVVQGQTTAHQPQDGDEAKQAKKAP) is disordered. Residues Cys825, Cys827, Cys836, and Cys837 each contribute to the Zn(2+) site.

Belongs to the SecA family. Monomer and homodimer. Part of the essential Sec protein translocation apparatus which comprises SecA, SecYEG and auxiliary proteins SecDF. Other proteins may also be involved. The cofactor is Zn(2+).

Its subcellular location is the cell membrane. It is found in the cytoplasm. The catalysed reaction is ATP + H2O + cellular proteinSide 1 = ADP + phosphate + cellular proteinSide 2.. Part of the Sec protein translocase complex. Interacts with the SecYEG preprotein conducting channel. Has a central role in coupling the hydrolysis of ATP to the transfer of proteins into and across the cell membrane, serving as an ATP-driven molecular motor driving the stepwise translocation of polypeptide chains across the membrane. The chain is Protein translocase subunit SecA from Bacillus velezensis (strain DSM 23117 / BGSC 10A6 / LMG 26770 / FZB42) (Bacillus amyloliquefaciens subsp. plantarum).